The chain runs to 227 residues: 7-cyano-7-deazaguanine synthase (227 aa).

8–18 (LSGGLDSATVL) provides a ligand contact to ATP. Positions 191, 201, 204, and 207 each coordinate Zn(2+).

Belongs to the QueC family. Zn(2+) is required as a cofactor.

The catalysed reaction is 7-carboxy-7-deazaguanine + NH4(+) + ATP = 7-cyano-7-deazaguanine + ADP + phosphate + H2O + H(+). Its pathway is purine metabolism; 7-cyano-7-deazaguanine biosynthesis. Functionally, catalyzes the ATP-dependent conversion of 7-carboxy-7-deazaguanine (CDG) to 7-cyano-7-deazaguanine (preQ(0)). This Paramagnetospirillum magneticum (strain ATCC 700264 / AMB-1) (Magnetospirillum magneticum) protein is 7-cyano-7-deazaguanine synthase.